The following is a 41-amino-acid chain: uncharacterized protein (41 aa).

The interval 1–41 (MGKKHRNRITGQKKNNHIPEKDIIAAEEAHGKEYSAAKRKP) is disordered. A compositionally biased stretch (basic and acidic residues) spans 17–41 (HIPEKDIIAAEEAHGKEYSAAKRKP).

This is an uncharacterized protein from Bacillus subtilis (strain 168).